The primary structure comprises 261 residues: Cytochrome c oxidase subunit 3 (261 aa).

Residues 1 to 15 (MAHQAHAYHMVDPSP) lie on the Mitochondrial matrix side of the membrane. The chain crosses the membrane as a helical span at residues 16-34 (WPLTGAVAALLLTSGLAVW). Residues 35 to 40 (FHFKSL) are Mitochondrial intermembrane-facing. Residues 41–66 (TLLAMGLLLMILTMIQWWRDIIREGT) form a helical membrane-spanning segment. The Mitochondrial matrix segment spans residues 67–72 (FQGHHT). A helical membrane pass occupies residues 73–105 (PPVQKGLRYGMILFITSEVFFFLGFFWAFYHSS). Topologically, residues 106–128 (LAPTPELGGIWPPTGITPLDPFE) are mitochondrial intermembrane. Residues 129 to 152 (VPLLNTAVLLASGVTVTWTHHSLM) form a helical membrane-spanning segment. Topologically, residues 153-155 (EGK) are mitochondrial matrix. A helical transmembrane segment spans residues 156-183 (RTEATQALTLTILLGLYFTALQAMEYYE). At 184-190 (APFTIAD) the chain is on the mitochondrial intermembrane side. Residues 191–223 (GVYGTTFFVATGFHGLHVIIGSTFLAGCLLRQI) form a helical membrane-spanning segment. Over 224–232 (LYHFTSSHH) the chain is Mitochondrial matrix. The chain crosses the membrane as a helical span at residues 233–256 (FGFEAAAWYWHFVDVVWLFLYVSI). At 257 to 261 (YWWGS) the chain is on the mitochondrial intermembrane side.

The protein belongs to the cytochrome c oxidase subunit 3 family. As to quaternary structure, component of the cytochrome c oxidase (complex IV, CIV), a multisubunit enzyme composed of 14 subunits. The complex is composed of a catalytic core of 3 subunits MT-CO1, MT-CO2 and MT-CO3, encoded in the mitochondrial DNA, and 11 supernumerary subunits COX4I, COX5A, COX5B, COX6A, COX6B, COX6C, COX7A, COX7B, COX7C, COX8 and NDUFA4, which are encoded in the nuclear genome. The complex exists as a monomer or a dimer and forms supercomplexes (SCs) in the inner mitochondrial membrane with NADH-ubiquinone oxidoreductase (complex I, CI) and ubiquinol-cytochrome c oxidoreductase (cytochrome b-c1 complex, complex III, CIII), resulting in different assemblies (supercomplex SCI(1)III(2)IV(1) and megacomplex MCI(2)III(2)IV(2)).

The protein localises to the mitochondrion inner membrane. The enzyme catalyses 4 Fe(II)-[cytochrome c] + O2 + 8 H(+)(in) = 4 Fe(III)-[cytochrome c] + 2 H2O + 4 H(+)(out). Component of the cytochrome c oxidase, the last enzyme in the mitochondrial electron transport chain which drives oxidative phosphorylation. The respiratory chain contains 3 multisubunit complexes succinate dehydrogenase (complex II, CII), ubiquinol-cytochrome c oxidoreductase (cytochrome b-c1 complex, complex III, CIII) and cytochrome c oxidase (complex IV, CIV), that cooperate to transfer electrons derived from NADH and succinate to molecular oxygen, creating an electrochemical gradient over the inner membrane that drives transmembrane transport and the ATP synthase. Cytochrome c oxidase is the component of the respiratory chain that catalyzes the reduction of oxygen to water. Electrons originating from reduced cytochrome c in the intermembrane space (IMS) are transferred via the dinuclear copper A center (CU(A)) of subunit 2 and heme A of subunit 1 to the active site in subunit 1, a binuclear center (BNC) formed by heme A3 and copper B (CU(B)). The BNC reduces molecular oxygen to 2 water molecules using 4 electrons from cytochrome c in the IMS and 4 protons from the mitochondrial matrix. The sequence is that of Cytochrome c oxidase subunit 3 (mt-co3) from Polypterus ornatipinnis (Ornate bichir).